Reading from the N-terminus, the 379-residue chain is Succinate--CoA ligase [ADP-forming] subunit beta (379 aa).

The 228-residue stretch at 9 to 236 (KEIARKYGIE…GRDATPYEKV (228 aa)) folds into the ATP-grasp domain. Residues K46, 53–55 (GRG), E92, V95, and E100 contribute to the ATP site. Mg(2+)-binding residues include N192 and D206. Residues N256 and 313–315 (GIT) contribute to the substrate site.

Belongs to the succinate/malate CoA ligase beta subunit family. Heterotetramer of two alpha and two beta subunits. Mg(2+) serves as cofactor.

The catalysed reaction is succinate + ATP + CoA = succinyl-CoA + ADP + phosphate. It carries out the reaction GTP + succinate + CoA = succinyl-CoA + GDP + phosphate. The protein operates within carbohydrate metabolism; tricarboxylic acid cycle; succinate from succinyl-CoA (ligase route): step 1/1. Succinyl-CoA synthetase functions in the citric acid cycle (TCA), coupling the hydrolysis of succinyl-CoA to the synthesis of either ATP or GTP and thus represents the only step of substrate-level phosphorylation in the TCA. The beta subunit provides nucleotide specificity of the enzyme and binds the substrate succinate, while the binding sites for coenzyme A and phosphate are found in the alpha subunit. The polypeptide is Succinate--CoA ligase [ADP-forming] subunit beta (Desulfurococcus amylolyticus (strain DSM 18924 / JCM 16383 / VKM B-2413 / 1221n) (Desulfurococcus kamchatkensis)).